A 282-amino-acid chain; its full sequence is 2-dehydro-3-deoxyphosphooctonate aldolase (282 aa).

Belongs to the KdsA family.

The protein resides in the cytoplasm. The catalysed reaction is D-arabinose 5-phosphate + phosphoenolpyruvate + H2O = 3-deoxy-alpha-D-manno-2-octulosonate-8-phosphate + phosphate. It participates in carbohydrate biosynthesis; 3-deoxy-D-manno-octulosonate biosynthesis; 3-deoxy-D-manno-octulosonate from D-ribulose 5-phosphate: step 2/3. The protein operates within bacterial outer membrane biogenesis; lipopolysaccharide biosynthesis. This is 2-dehydro-3-deoxyphosphooctonate aldolase from Bordetella avium (strain 197N).